The primary structure comprises 1350 residues: Probable serine/threonine-protein kinase irlE (1350 aa).

Asn-37 carries N-linked (GlcNAc...) asparagine glycosylation. A helical transmembrane segment spans residues 149–169; that stretch reads FWEILASCYGTISFIKFFNIF. The stretch at 731–802 forms a coiled coil; the sequence is EAELKEKFEI…NIQQNYENQH (72 aa). A compositionally biased stretch (basic residues) spans 761 to 771; the sequence is LKKKNKLKKQK. Disordered stretches follow at residues 761 to 795 and 807 to 864; these read LKKK…QNIQ and RKFN…TTNS. The segment covering 772–795 has biased composition (low complexity); it reads NQQQQQQAKQQAQQQKQQHQQNIQ. A compositionally biased stretch (polar residues) spans 809 to 823; it reads FNQQTKGRPISPSSI. The span at 824-864 shows a compositional bias: low complexity; the sequence is QNQNLNPTLLQNQNQTSNPTPNLESTKKATPTTTTTTTTNS. Positions 903 to 1166 constitute a Protein kinase domain; the sequence is KKESNILGRG…LSSVLKHPLF (264 aa). ATP-binding positions include 909–917 and Lys-932; that span reads LGRGSNGTL. The active-site Proton acceptor is Asp-1034. One can recognise a KEN domain in the interval 1169 to 1346; that stretch reads SLKKIKFLES…KNSIHFSNDT (178 aa).

It belongs to the protein kinase superfamily. Ser/Thr protein kinase family.

It is found in the membrane. It carries out the reaction L-seryl-[protein] + ATP = O-phospho-L-seryl-[protein] + ADP + H(+). The enzyme catalyses L-threonyl-[protein] + ATP = O-phospho-L-threonyl-[protein] + ADP + H(+). This is Probable serine/threonine-protein kinase irlE (irlE) from Dictyostelium discoideum (Social amoeba).